A 206-amino-acid polypeptide reads, in one-letter code: Ras-related protein RABG3c (206 aa).

15–22 (GDSGVGKT) is a binding site for GTP. The Effector region signature appears at 37-45 (YKATIGADF). Residues 63–67 (DTAGQ), 125–128 (NKTD), and 158–159 (SA) each bind GTP. S-geranylgeranyl cysteine attachment occurs at residues C204 and C206. C206 bears the Cysteine methyl ester mark.

It belongs to the small GTPase superfamily. Rab family.

Its subcellular location is the cell membrane. Intracellular vesicle trafficking and protein transport. This Arabidopsis thaliana (Mouse-ear cress) protein is Ras-related protein RABG3c (RABG3C).